The sequence spans 122 residues: Ribosome-binding factor A (122 aa).

This sequence belongs to the RbfA family. In terms of assembly, monomer. Binds 30S ribosomal subunits, but not 50S ribosomal subunits or 70S ribosomes.

The protein localises to the cytoplasm. Its function is as follows. One of several proteins that assist in the late maturation steps of the functional core of the 30S ribosomal subunit. Associates with free 30S ribosomal subunits (but not with 30S subunits that are part of 70S ribosomes or polysomes). Required for efficient processing of 16S rRNA. May interact with the 5'-terminal helix region of 16S rRNA. The chain is Ribosome-binding factor A from Anaeromyxobacter sp. (strain Fw109-5).